The following is a 388-amino-acid chain: Protein TsgA homolog (388 aa).

12 helical membrane-spanning segments follow: residues 11–31, 50–70, 77–97, 101–121, 133–153, 160–180, 206–226, 244–264, 268–288, 298–318, 332–352, and 360–380; these read WISF…GMIM, TFLN…IEII, IFSF…NSIF, INMF…TFII, LLLL…IVTA, IIWY…FLLT, VFLL…FISW, SLVS…SFII, NLYR…YCFI, YIII…ITLA, LILL…SPIV, and TLIS…LIYF.

The protein belongs to the major facilitator superfamily. TsgA family.

It localises to the cell membrane. This Buchnera aphidicola subsp. Acyrthosiphon pisum (strain Tuc7) protein is Protein TsgA homolog.